A 389-amino-acid polypeptide reads, in one-letter code: Tryptophan synthase beta chain 1 (389 aa).

The residue at position 84 (lysine 84) is an N6-(pyridoxal phosphate)lysine.

The protein belongs to the TrpB family. As to quaternary structure, tetramer of two alpha and two beta chains. Pyridoxal 5'-phosphate is required as a cofactor.

It is found in the plastid. The protein resides in the chloroplast. It catalyses the reaction (1S,2R)-1-C-(indol-3-yl)glycerol 3-phosphate + L-serine = D-glyceraldehyde 3-phosphate + L-tryptophan + H2O. Its pathway is amino-acid biosynthesis; L-tryptophan biosynthesis; L-tryptophan from chorismate: step 5/5. The beta subunit is responsible for the synthesis of L-tryptophan from indole and L-serine. The protein is Tryptophan synthase beta chain 1 (TSB1) of Zea mays (Maize).